The chain runs to 163 residues: Bursicon (163 aa).

The N-terminal stretch at 1–23 (MKSSVCVLLKVLACILLPGGLNA) is a signal peptide. Cystine bridges form between cysteine 39-cysteine 88, cysteine 53-cysteine 102, cysteine 63-cysteine 123, cysteine 67-cysteine 125, and cysteine 85-cysteine 128. In terms of domain architecture, CTCK spans 39-129 (CQVTPVIHVL…PLECMCRPCT (91 aa)).

Heterodimer of burs and pburs.

It localises to the secreted. Its function is as follows. Final heterodimeric neurohormone released at the end of the molting cycle, involved in the sclerotization (tanning) of the insect cuticle, melanization and wing spreading. The sequence is that of Bursicon from Aedes aegypti (Yellowfever mosquito).